The following is a 194-amino-acid chain: ATP-dependent Clp protease proteolytic subunit (194 aa).

S98 serves as the catalytic Nucleophile. H123 is an active-site residue.

Belongs to the peptidase S14 family. In terms of assembly, fourteen ClpP subunits assemble into 2 heptameric rings which stack back to back to give a disk-like structure with a central cavity, resembling the structure of eukaryotic proteasomes.

Its subcellular location is the cytoplasm. The catalysed reaction is Hydrolysis of proteins to small peptides in the presence of ATP and magnesium. alpha-casein is the usual test substrate. In the absence of ATP, only oligopeptides shorter than five residues are hydrolyzed (such as succinyl-Leu-Tyr-|-NHMec, and Leu-Tyr-Leu-|-Tyr-Trp, in which cleavage of the -Tyr-|-Leu- and -Tyr-|-Trp bonds also occurs).. In terms of biological role, cleaves peptides in various proteins in a process that requires ATP hydrolysis. Has a chymotrypsin-like activity. Plays a major role in the degradation of misfolded proteins. The sequence is that of ATP-dependent Clp protease proteolytic subunit from Ruminiclostridium cellulolyticum (strain ATCC 35319 / DSM 5812 / JCM 6584 / H10) (Clostridium cellulolyticum).